Reading from the N-terminus, the 291-residue chain is Elongation factor Ts (291 aa).

The interval 84-87 (TDFV) is involved in Mg(2+) ion dislocation from EF-Tu.

This sequence belongs to the EF-Ts family.

It is found in the cytoplasm. Functionally, associates with the EF-Tu.GDP complex and induces the exchange of GDP to GTP. It remains bound to the aminoacyl-tRNA.EF-Tu.GTP complex up to the GTP hydrolysis stage on the ribosome. The polypeptide is Elongation factor Ts (Bifidobacterium adolescentis (strain ATCC 15703 / DSM 20083 / NCTC 11814 / E194a)).